A 542-amino-acid chain; its full sequence is Chaperonin GroEL (542 aa).

Residues 29 to 32 (TLGP), 86 to 90 (DGTTT), Gly-413, and Asp-494 each bind ATP.

The protein belongs to the chaperonin (HSP60) family. In terms of assembly, forms a cylinder of 14 subunits composed of two heptameric rings stacked back-to-back. Interacts with the co-chaperonin GroES.

The protein localises to the cytoplasm. The enzyme catalyses ATP + H2O + a folded polypeptide = ADP + phosphate + an unfolded polypeptide.. In terms of biological role, together with its co-chaperonin GroES, plays an essential role in assisting protein folding. The GroEL-GroES system forms a nano-cage that allows encapsulation of the non-native substrate proteins and provides a physical environment optimized to promote and accelerate protein folding. This Endomicrobium trichonymphae protein is Chaperonin GroEL.